Reading from the N-terminus, the 382-residue chain is Lipid-A-disaccharide synthase (382 aa).

It belongs to the LpxB family.

The enzyme catalyses a lipid X + a UDP-2-N,3-O-bis[(3R)-3-hydroxyacyl]-alpha-D-glucosamine = a lipid A disaccharide + UDP + H(+). Its pathway is bacterial outer membrane biogenesis; LPS lipid A biosynthesis. Its function is as follows. Condensation of UDP-2,3-diacylglucosamine and 2,3-diacylglucosamine-1-phosphate to form lipid A disaccharide, a precursor of lipid A, a phosphorylated glycolipid that anchors the lipopolysaccharide to the outer membrane of the cell. This is Lipid-A-disaccharide synthase from Alkalilimnicola ehrlichii (strain ATCC BAA-1101 / DSM 17681 / MLHE-1).